A 212-amino-acid chain; its full sequence is MAETKEFKTLYNLFIDSYLQKLAQHSIPTNVTCAIHIGEVIGQFKNCALRITNKCMSNSRLSFTLMVESFIEVISLLPEKDRRRIAEEIGIDLDDVPSAVSKLEKNCNAYAEVNNIIDIQKLDIGECSAPPGQHMLLQIVNTGSAERNCGLQTIVKSLNKIYVPPIIENRLPYYDPWFLVGVAIILVIFTVAICSIRRNLALKYRYGTFLYV.

The Virion surface portion of the chain corresponds to 1–175 (MAETKEFKTL…IIENRLPYYD (175 aa)). 3 cysteine pairs are disulfide-bonded: Cys-33-Cys-55, Cys-47-Cys-127, and Cys-107-Cys-149. Residues 176 to 196 (PWFLVGVAIILVIFTVAICSI) traverse the membrane as a helical segment. Topologically, residues 197–212 (RRNLALKYRYGTFLYV) are intravirion.

The protein belongs to the orthopoxvirus OPG053 family. In terms of assembly, component of the entry fusion complex (EFC) composed of OPG053/F9, OPG076/O3, OPG086/G3, OPG094/G9, OPG095/L1, OPG099/L5, OPG107/H2, OPG143/A16, OPG104/J5, OPG147/A21 and OPG155/A28. Except for OPG095/L1 and OPG052/F9, each of the EFC proteins is required for assembly or stability of the complex. Post-translationally, disulfid bonds are oxidized in the cytoplasm by OPG088 protein. In terms of processing, unglycosylated because produced in viral factories instead of the classic ER -Golgi route.

The protein resides in the virion membrane. In terms of biological role, component of the entry fusion complex (EFC), which consists of 11 proteins. During cell infection, this complex mediates entry of the virion core into the host cytoplasm by a two-step mechanism consisting of lipid mixing of the viral and cellular membranes and subsequent pore formation. This chain is Entry-fusion complex associated protein OPG083 (OPG053), found in Vaccinia virus (strain Western Reserve) (VACV).